The primary structure comprises 128 residues: Ig kappa chain V-V region T1 (128 aa).

The N-terminal stretch at Met1–Cys20 is a signal peptide. The interval Asp21–Cys43 is framework-1. An intrachain disulfide couples Cys43 to Cys108. Residues Lys44–Thr54 form a complementarity-determining-1 region. Residues Trp55–Tyr69 are framework-2. Residues Arg70–Asp76 are complementarity-determining-2. The framework-3 stretch occupies residues Gly77 to Cys108. The interval Leu109–Thr117 is complementarity-determining-3. The tract at residues Phe118 to Lys127 is framework-4.

The chain is Ig kappa chain V-V region T1 from Mus musculus (Mouse).